The chain runs to 359 residues: DNA polymerase IV (359 aa).

The UmuC domain maps to Ile-4–Gly-184. 2 residues coordinate Mg(2+): Asp-8 and Asp-102. Residue Glu-103 is part of the active site.

It belongs to the DNA polymerase type-Y family. In terms of assembly, monomer. The cofactor is Mg(2+).

It is found in the cytoplasm. The enzyme catalyses DNA(n) + a 2'-deoxyribonucleoside 5'-triphosphate = DNA(n+1) + diphosphate. Poorly processive, error-prone DNA polymerase involved in untargeted mutagenesis. Copies undamaged DNA at stalled replication forks, which arise in vivo from mismatched or misaligned primer ends. These misaligned primers can be extended by PolIV. Exhibits no 3'-5' exonuclease (proofreading) activity. May be involved in translesional synthesis, in conjunction with the beta clamp from PolIII. The sequence is that of DNA polymerase IV from Xanthomonas axonopodis pv. citri (strain 306).